A 71-amino-acid polypeptide reads, in one-letter code: Plasticin-C2 (71 aa).

An N-terminal signal peptide occupies residues 1–22; the sequence is MAFLKKSLLLVLFLALVPLSIC. Residues 23-45 constitute a propeptide that is removed on maturation; that stretch reads EEEKREEEDEEKQEDDDQSENKR. The disordered stretch occupies residues 25-46; it reads EKREEEDEEKQEDDDQSENKRG. A compositionally biased stretch (acidic residues) spans 26–40; that stretch reads KREEEDEEKQEDDDQ. Residue N68 is modified to Asparagine amide. A propeptide spanning residues 70 to 71 is cleaved from the precursor; that stretch reads ES.

The protein belongs to the frog skin active peptide (FSAP) family. Plasticin subfamily. As to expression, expressed by the skin glands.

Its subcellular location is the secreted. The protein localises to the target cell membrane. Neutral peptide with no antimicrobial activity. May act in synergy with cationic peptides by enhancing their activity. Has a moderate hemolytic activity. This is Plasticin-C2 from Agalychnis callidryas (Red-eyed tree frog).